A 94-amino-acid polypeptide reads, in one-letter code: Pyrimidine/purine nucleoside phosphorylase (94 aa).

Belongs to the nucleoside phosphorylase PpnP family.

It catalyses the reaction a purine D-ribonucleoside + phosphate = a purine nucleobase + alpha-D-ribose 1-phosphate. The catalysed reaction is adenosine + phosphate = alpha-D-ribose 1-phosphate + adenine. It carries out the reaction cytidine + phosphate = cytosine + alpha-D-ribose 1-phosphate. The enzyme catalyses guanosine + phosphate = alpha-D-ribose 1-phosphate + guanine. It catalyses the reaction inosine + phosphate = alpha-D-ribose 1-phosphate + hypoxanthine. The catalysed reaction is thymidine + phosphate = 2-deoxy-alpha-D-ribose 1-phosphate + thymine. It carries out the reaction uridine + phosphate = alpha-D-ribose 1-phosphate + uracil. The enzyme catalyses xanthosine + phosphate = alpha-D-ribose 1-phosphate + xanthine. Functionally, catalyzes the phosphorolysis of diverse nucleosides, yielding D-ribose 1-phosphate and the respective free bases. Can use uridine, adenosine, guanosine, cytidine, thymidine, inosine and xanthosine as substrates. Also catalyzes the reverse reactions. In Pseudomonas fluorescens (strain ATCC BAA-477 / NRRL B-23932 / Pf-5), this protein is Pyrimidine/purine nucleoside phosphorylase.